A 341-amino-acid chain; its full sequence is MAVERDVADVFVYAKLSGLCARLWVGERLGTLQGVGTLCDLWVRLFSEPAPRSAGAHLVGLIQRRVEACLLRDCVRAASCYQEPPSLFSALLARYDYLYLKTLSSSESQAGFRVCQPPDLGRFSLFRWEKWPCIEAVTRGSPVSWYNRVPRSDERVLWDLRLDQSYYHALWQTLCSIPEDDRTACSRLVREEVALYAVGWVLRLRMFYGVQKKDAPSELSSNGAIRRCLGTWWKCILFAWDCSLTERGAWSGWRYERFLNNPVDGVQWEPDLDAFERAGSRFLYCLARTVFHAQLFTPATIVAFFMMKRFEARGICALAECIHAGSARTLPREFLGEAAYV.

This is an uncharacterized protein from Treponema pallidum (strain Nichols).